Reading from the N-terminus, the 1070-residue chain is MMFSRVMQLALICAVTCEDNPCLWERFTNSRDIEFMIPVVNLSTSRRLSMSQRICMVSMGKHWSRIFSEGEEDRGMKDLDPLLMSSLNWRGTAKTRSSNSFNFDILDGIFLGFLDLVKWGEEADRHTPIHPECIKSKVCGFMTASGPRIKTCTGKFRGADRHGHCTNRATPHEATNVISVGVQHAQEANQVDEHEARYISEARKSINPEICSIDGVEINQCDLASPGRWLMLHYASFRLQEGSLVYLSPGLNIKWSQINVPASDFYCINVSDHLNTHYRPCEVNCTDNCQGDELYCSVHQCARSAECKCSFIGSRGMAEVQIGDRWFKPAVVGSQQFFVKEDVPVLQQPSADCTTCSMTCTAEGIAISSIKDELKDVTVCVEGFCSTRVSKGSKVWKIEFHNQYPSSGSVALARGTTVSGETFELTAECGRRTGCEQINCLFCREMLSNPQCYPYGKWFLLFLILATLYIIVALLKTIMRIFMACLSVLYGPFIIIIKISRCLGRLGKRKGERTYVRLMEALDDERKPEVVRAPVSLGRTKQPRIVLFIVLALLVHMALCCDESRLVEETSVTCNPGPDNIFSCSTKEMITVKELRAGKTICVSLKGPGGSLSSPIKIKMLDIVGRSDLLDIYFTFNGHANCKSVRRCRWAGSCGNSGCLGVGKEDYDRELGDQESSLHPNWRDCYDGCGGAACGCFNAAPSCIFLKRYVTNADSRVFKVFKPSAWFLSTKIVVETTSHKEDVTLKSGEAKVIDKVSFHYRTDKNLFAGMSIPPIVTEVKREGKPLSFFLENQGQHPKCKDENSARTSSASNCIVDQNTISANVRVDDVSCRSNLVSISGMSTLKPLPQRVGDFLIQLHNDEPVLLATGDSGVVEGELQIDLSHKKISIKVDTTVCRGTVKELKGCVGCTKGAFASLEIHSTSAGSASLQCSLSSCYMEVQKGVNNVNCSLRFSKAVVEETCVLACSGSKEQLSIKGNLIIGGDFKKLTEDSATSFSHTDSKDTRIHLQTGLMNWLDTLFGASLLGKILGIGLAILSPFILILILRWILRVVLRRSRIRREPKYEMAKYS.

Positions 1–17 (MMFSRVMQLALICAVTC) are cleaved as a signal peptide. Residues 18 to 457 (EDNPCLWERF…SNPQCYPYGK (440 aa)) are Lumenal-facing. Intrachain disulfides connect cysteine 22/cysteine 55, cysteine 152/cysteine 165, cysteine 211/cysteine 221, cysteine 267/cysteine 309, cysteine 296/cysteine 301, cysteine 353/cysteine 356, cysteine 360/cysteine 429, and cysteine 380/cysteine 385. Asparagine 269 carries an N-linked (GlcNAc...) asparagine; by host glycan. A helical transmembrane segment spans residues 458–478 (WFLLFLILATLYIIVALLKTI). Topologically, residues 479–536 (MRIFMACLSVLYGPFIIIIKISRCLGRLGKRKGERTYVRLMEALDDERKPEVVRAPVS) are cytoplasmic. Positions 480-522 (RIFMACLSVLYGPFIIIIKISRCLGRLGKRKGERTYVRLMEAL) are golgi retention signal. The internal signal sequence for glycoprotein C stretch occupies residues 541–560 (KQPRIVLFIVLALLVHMALC). The propeptide occupies 550–560 (VLALLVHMALC). Topologically, residues 550 to 1023 (VLALLVHMAL…NWLDTLFGAS (474 aa)) are lumenal. Cystine bridges form between cysteine 561/cysteine 602, cysteine 574/cysteine 584, cysteine 642/cysteine 831, cysteine 648/cysteine 696, cysteine 654/cysteine 703, cysteine 659/cysteine 685, cysteine 689/cysteine 694, cysteine 799/cysteine 813, cysteine 896/cysteine 966, and cysteine 906/cysteine 909. The interval 648–654 (CRWAGSC) is fusion loop. The tract at residues 690 to 701 (GGAACGCFNAAP) is fusion loop. The helical transmembrane segment at 1024–1044 (LLGKILGIGLAILSPFILILI) threads the bilayer. The Cytoplasmic portion of the chain corresponds to 1045 to 1070 (LRWILRVVLRRSRIRREPKYEMAKYS).

The protein belongs to the phlebovirus envelope glycoprotein family. As to quaternary structure, heterodimer with glycoprotein C. Heterodimer with glycoprotein N. Homotrimer (postfusion). In terms of processing, specific enzymatic cleavages in vivo yield mature proteins Glycoprotein C, and Glycoprotein N. Post-translationally, glycosylated. Palmitoylated.

It localises to the virion membrane. It is found in the host Golgi apparatus membrane. Its subcellular location is the host endoplasmic reticulum membrane. Structural component of the virion that interacts with glycoprotein C. It shields the hydrophobic fusion loops of the glycoprotein C, preventing premature fusion. The glycoprotein protrusions are arranged on an icosahedral lattice, with T=12 triangulation. They are able to attach the virion to the host cell receptor CD209/DC-SIGN and to promote fusion of membranes with the late endosome after endocytosis of the virion. Plays a role in the packaging of ribonucleoproteins during virus assembly. Functionally, structural component of the virion that interacts with glycoprotein N. Acts as a class II fusion protein that is activated upon acidification and subsequent repositioning of the glycoprotein N. The glycoprotein protrusions are arranged on an icosahedral lattice, with T=12 triangulation. They are able to attach the virion to the host cell receptor CD209/DC-SIGN and to promote fusion of membranes with the late endosome after endocytosis of the virion. The protein is Envelopment polyprotein (GP) of Amblyomma variegatum (Tropical bont tick).